The sequence spans 257 residues: MKAVILAGGLGTRLSEETIVKPKPMVEIGGKPILWHIMKMYSVHGIKDFIICCGYKGYVIKEYFANYFLHMSDVTFHMAENRMEVHHKRVEPWNVTLVDTGDSSMTGGRLKRVAEYVKDDEAFLFTYGDGVADLDIKATIDFHKAHGKKATLTATFPPGRFGALDIQAGQVRSFQEKPKGDGAMINGGFFVLNPSVIDLIDNDATTWEQEPLMTLAQQGELMAFEHPGFWQPMDTLRDKVYLEGLWEKGKAPWKTWE.

Substrate is bound by residues 6 to 10 (LAGGL), 11 to 13 (GTR), Lys23, Ser104, Arg109, and Gly128. Mg(2+)-binding residues include Asp129 and Asp234.

Belongs to the glucose-1-phosphate cytidylyltransferase family. As to quaternary structure, homohexamer. Mg(2+) is required as a cofactor.

It catalyses the reaction alpha-D-glucose 1-phosphate + CTP + H(+) = CDP-D-glucose + diphosphate. It participates in nucleotide-sugar biosynthesis; CDP-3,6-dideoxy-D-mannose biosynthesis; CDP-3,6-dideoxy-D-mannose from CTP and alpha-D-glucose 1-phosphate: step 1/5. The protein operates within bacterial outer membrane biogenesis; LPS O-antigen biosynthesis. Its function is as follows. Involved in the biosynthesis of the tyvelose, a 3,6-dideoxyhexose found in the O-antigen of the surface lipopolysaccharides. It catalyzes the transfer of a CMP moiety from CTP to glucose 1-phosphate. This enzyme can utilize either CTP or UTP as the nucleotide donor. The polypeptide is Glucose-1-phosphate cytidylyltransferase (rfbF) (Salmonella typhi).